A 566-amino-acid polypeptide reads, in one-letter code: E3 ubiquitin-protein ligase RNF220 (566 aa).

Lys277 participates in a covalent cross-link: Glycyl lysine isopeptide (Lys-Gly) (interchain with G-Cter in SUMO2). The segment at 277 to 297 (KREGESPTASPHSSATDDLHH) is disordered. Phosphoserine is present on Ser390. A coiled-coil region spans residues 485–513 (EDSAVTTFEALKARVRELERQLSRGDRYK). A required for targeting to the cytoplasm region spans residues 514–522 (CLICMDSYS). The segment at 514-553 (CLICMDSYSMPLTSIQCWHVHCEECWLRTLGAKKLCPQCN) adopts an RING-type zinc-finger fold.

Interacts with SIN3B. Interacts with CTNNB1 (via Armadillo repeats 2-8). Interacts with USP7 (via MATH domain). Auto-ubiquitinated; leads to proteasomal degradation.

The protein resides in the cytoplasm. Its subcellular location is the nucleus. The catalysed reaction is S-ubiquitinyl-[E2 ubiquitin-conjugating enzyme]-L-cysteine + [acceptor protein]-L-lysine = [E2 ubiquitin-conjugating enzyme]-L-cysteine + N(6)-ubiquitinyl-[acceptor protein]-L-lysine.. Its pathway is protein modification; protein ubiquitination. Its function is as follows. E3 ubiquitin-protein ligase that promotes the ubiquitination and proteasomal degradation of SIN3B. Independently of its E3 ligase activity, acts as a CTNNB1 stabilizer through USP7-mediated deubiquitination of CTNNB1 and promotes Wnt signaling. Plays a critical role in the regulation of nuclear lamina. This chain is E3 ubiquitin-protein ligase RNF220 (RNF220), found in Macaca fascicularis (Crab-eating macaque).